We begin with the raw amino-acid sequence, 188 residues long: 3-deoxy-D-manno-octulosonate 8-phosphate phosphatase KdsC (188 aa).

Asp32 and Asp34 together coordinate Mg(2+). Substrate is bound by residues Asp34, 55–59, Arg63, Arg78, Arg86, and Lys102; that span reads NVRDG. Asp125 contacts Mg(2+).

As to quaternary structure, homotetramer. Mg(2+) serves as cofactor. It depends on Co(2+) as a cofactor.

It carries out the reaction 3-deoxy-alpha-D-manno-2-octulosonate-8-phosphate + H2O = 3-deoxy-alpha-D-manno-oct-2-ulosonate + phosphate. It functions in the pathway carbohydrate biosynthesis; 3-deoxy-D-manno-octulosonate biosynthesis; 3-deoxy-D-manno-octulosonate from D-ribulose 5-phosphate: step 3/3. The protein operates within bacterial outer membrane biogenesis; lipopolysaccharide biosynthesis. Its activity is regulated as follows. Inhibited by calcium, cadmium, mercury, and copper ions. Functionally, catalyzes the hydrolysis of 3-deoxy-D-manno-octulosonate 8-phosphate (KDO 8-P) to 3-deoxy-D-manno-octulosonate (KDO) and inorganic phosphate. The polypeptide is 3-deoxy-D-manno-octulosonate 8-phosphate phosphatase KdsC (Escherichia coli (strain B / BL21-DE3)).